Here is a 394-residue protein sequence, read N- to C-terminus: Na(+)/H(+) antiporter NhaA (394 aa).

The next 11 helical transmembrane spans lie at 24–44, 58–78, 96–116, 126–146, 155–175, 180–200, 214–234, 267–287, 300–320, 336–356, and 370–390; these read AGLV…SPLA, LSVQ…LVGL, TLPG…YVML, GWAI…SLLG, IFLA…IAIF, INVA…SLCA, AVLW…GVLL, VAFA…FASI, VAAG…ALMV, VLGV…IGLL, and GILA…RIAG.

Belongs to the NhaA Na(+)/H(+) (TC 2.A.33) antiporter family.

It localises to the cell inner membrane. The catalysed reaction is Na(+)(in) + 2 H(+)(out) = Na(+)(out) + 2 H(+)(in). Na(+)/H(+) antiporter that extrudes sodium in exchange for external protons. The protein is Na(+)/H(+) antiporter NhaA of Azorhizobium caulinodans (strain ATCC 43989 / DSM 5975 / JCM 20966 / LMG 6465 / NBRC 14845 / NCIMB 13405 / ORS 571).